The sequence spans 594 residues: Homeobox protein prospero homolog 1 (594 aa).

2 stretches are compositionally biased toward polar residues: residues 1–13 (MSSGLPSIAATAQ) and 36–50 (PPVNSNGSTPNSSNR). Disordered stretches follow at residues 1–20 (MSSGLPSIAATAQPSANGFS), 30–180 (IYYS…FQPQ), and 358–389 (DTSSEMKKKRTKVEIKKEDAMSSRASPLSASA). The segment covering 73-101 (STSVSSNSSSSSSTSNTNSTPSSSSTSSK) has biased composition (low complexity). Residues 105 to 117 (EGMTETETMTASI) show a composition bias toward polar residues. The segment covering 118–135 (EQEKVIQNEESEAGKDGM) has biased composition (basic and acidic residues). Acidic residues predominate over residues 136–162 (EEHDDGMNDFEIIDDTNDEVEESEERE). Positions 369-378 (KVEIKKEDAM) are enriched in basic and acidic residues. Over residues 379 to 389 (SSRASPLSASA) the composition is skewed to low complexity. A Prospero-type homeo domain is found at 435–493 (SSMLTPMHLRKAKLMFFYTRYPNSNLLKSYFPDIRFNKNNTAQLVKWFSNFREFYYNQM). Residues 435 to 593 (SSMLTPMHLR…KEPNFLERLE (159 aa)) form a homeo-Prospero region. Positions 494-593 (EKFARQALAE…KEPNFLERLE (100 aa)) constitute a Prospero domain.

Belongs to the Prospero homeodomain family.

Its subcellular location is the nucleus. Its function is as follows. Transcription factor involved in developmental processes. Controls the transcription of genes required for excretory canal formation. This is Homeobox protein prospero homolog 1 from Caenorhabditis elegans.